We begin with the raw amino-acid sequence, 319 residues long: Acetyl-coenzyme A carboxylase carboxyl transferase subunit alpha (319 aa).

Positions 35 to 296 (NIDEEVHRLR…KAQLLEDLAD (262 aa)) constitute a CoA carboxyltransferase C-terminal domain.

Belongs to the AccA family. As to quaternary structure, acetyl-CoA carboxylase is a heterohexamer composed of biotin carboxyl carrier protein (AccB), biotin carboxylase (AccC) and two subunits each of ACCase subunit alpha (AccA) and ACCase subunit beta (AccD).

The protein resides in the cytoplasm. The enzyme catalyses N(6)-carboxybiotinyl-L-lysyl-[protein] + acetyl-CoA = N(6)-biotinyl-L-lysyl-[protein] + malonyl-CoA. The protein operates within lipid metabolism; malonyl-CoA biosynthesis; malonyl-CoA from acetyl-CoA: step 1/1. Functionally, component of the acetyl coenzyme A carboxylase (ACC) complex. First, biotin carboxylase catalyzes the carboxylation of biotin on its carrier protein (BCCP) and then the CO(2) group is transferred by the carboxyltransferase to acetyl-CoA to form malonyl-CoA. The chain is Acetyl-coenzyme A carboxylase carboxyl transferase subunit alpha from Salmonella paratyphi C (strain RKS4594).